Consider the following 1020-residue polypeptide: Retinoblastoma-related protein (1020 aa).

Composition is skewed to polar residues over residues 382-391 and 398-409; these read SPTKTITSPL and ASHTNGILGSTN. The segment at 382–409 is disordered; it reads SPTKTITSPLSPHRSPASHTNGILGSTN. A domain A region spans residues 415 to 616; sequence TPVSTAMTTA…EKGSSMYNSL (202 aa). The tract at residues 415-869 is pocket; the sequence is TPVSTAMTTA…NEIFIPAAKP (455 aa). The interval 617-737 is spacer; it reads TVARPSLSAE…PGGGGETCAE (121 aa). Positions 738–869 are domain B; that stretch reads TGINIFFSKI…NEIFIPAAKP (132 aa).

This sequence belongs to the retinoblastoma protein (RB) family.

It localises to the nucleus. Regulator of biological processes that recruits a histone deacetylase to control gene transcription. May play a role in the entry into mitosis, negatively regulating the cell proliferation. Formation of stable complexes with geminiviridae replication-associated proteins may create a cellular environment which favors viral DNA replication. The protein is Retinoblastoma-related protein (RBR) of Ricinus communis (Castor bean).